Reading from the N-terminus, the 225-residue chain is Uracil-DNA glycosylase (225 aa).

Aspartate 67 (proton acceptor) is an active-site residue.

This sequence belongs to the uracil-DNA glycosylase (UDG) superfamily. UNG family.

It is found in the cytoplasm. The catalysed reaction is Hydrolyzes single-stranded DNA or mismatched double-stranded DNA and polynucleotides, releasing free uracil.. Excises uracil residues from the DNA which can arise as a result of misincorporation of dUMP residues by DNA polymerase or due to deamination of cytosine. This is Uracil-DNA glycosylase from Coxiella burnetii (strain Dugway 5J108-111).